We begin with the raw amino-acid sequence, 284 residues long: MTAQLIDGKAIAASLRQQIAQRVAERRQQGLRAPGLAVILVGTDPASQVYVSHKRKDCEEVGFLSRAYDLPAETSQADLLALIDELNEDPTIDGILVQLPLPEHLDSSLLLERIRPDKDVDGFHPYNIGRLAQRMPLLRPCTPKGIMTLLESTGADLYGMHAVVVGASNIVGRPMAMELLLAGCTVTVTHRFTKDLAGHVGQADIVVVAAGKPGLVKGEWIKEGAIVIDVGINRQEDGKLVGDVVYETALPRAGWITPVPGGVGPMTRAGLLENTLHAAEHLHK.

Residues 166–168 (GAS) and I232 each bind NADP(+).

This sequence belongs to the tetrahydrofolate dehydrogenase/cyclohydrolase family. As to quaternary structure, homodimer.

The catalysed reaction is (6R)-5,10-methylene-5,6,7,8-tetrahydrofolate + NADP(+) = (6R)-5,10-methenyltetrahydrofolate + NADPH. The enzyme catalyses (6R)-5,10-methenyltetrahydrofolate + H2O = (6R)-10-formyltetrahydrofolate + H(+). The protein operates within one-carbon metabolism; tetrahydrofolate interconversion. In terms of biological role, catalyzes the oxidation of 5,10-methylenetetrahydrofolate to 5,10-methenyltetrahydrofolate and then the hydrolysis of 5,10-methenyltetrahydrofolate to 10-formyltetrahydrofolate. This chain is Bifunctional protein FolD 1, found in Ectopseudomonas mendocina (strain ymp) (Pseudomonas mendocina).